The primary structure comprises 257 residues: Ribonuclease HII (257 aa).

In terms of domain architecture, RNase H type-2 spans 72–257 (TYIAGIDEVG…FAPIKDMIQK (186 aa)). Residues Asp-78, Glu-79, and Asp-170 each coordinate a divalent metal cation.

The protein belongs to the RNase HII family. The cofactor is Mn(2+). Mg(2+) serves as cofactor.

The protein localises to the cytoplasm. The catalysed reaction is Endonucleolytic cleavage to 5'-phosphomonoester.. Its function is as follows. Endonuclease that specifically degrades the RNA of RNA-DNA hybrids. The chain is Ribonuclease HII from Bacillus cereus (strain AH820).